A 558-amino-acid chain; its full sequence is Oxygen-dependent choline dehydrogenase (558 aa).

4–33 contributes to the FAD binding site; it reads DYIIIGAGSAGNVLATRLTEDSDTTVLLLE. His-473 functions as the Proton acceptor in the catalytic mechanism.

This sequence belongs to the GMC oxidoreductase family. It depends on FAD as a cofactor.

It catalyses the reaction choline + A = betaine aldehyde + AH2. It carries out the reaction betaine aldehyde + NAD(+) + H2O = glycine betaine + NADH + 2 H(+). It functions in the pathway amine and polyamine biosynthesis; betaine biosynthesis via choline pathway; betaine aldehyde from choline (cytochrome c reductase route): step 1/1. In terms of biological role, involved in the biosynthesis of the osmoprotectant glycine betaine. Catalyzes the oxidation of choline to betaine aldehyde and betaine aldehyde to glycine betaine at the same rate. The chain is Oxygen-dependent choline dehydrogenase from Citrobacter koseri (strain ATCC BAA-895 / CDC 4225-83 / SGSC4696).